We begin with the raw amino-acid sequence, 103 residues long: Acyl carrier protein homolog (103 aa).

Residues 3 to 87 form the Carrier domain; sequence ELTSEIKKEI…ETLEKVVQTT (85 aa). Ser-45 carries the post-translational modification O-(pantetheine 4'-phosphoryl)serine.

4'-phosphopantetheine is transferred from CoA to a specific serine of the apo-ACP-like protein.

The protein localises to the cytoplasm. Acyl carrier protein. This is Acyl carrier protein homolog from Clostridium acetobutylicum (strain ATCC 824 / DSM 792 / JCM 1419 / IAM 19013 / LMG 5710 / NBRC 13948 / NRRL B-527 / VKM B-1787 / 2291 / W).